The chain runs to 592 residues: Aspartate--tRNA ligase (592 aa).

Glu173 contacts L-aspartate. Positions 197 to 200 are aspartate; the sequence is QLFK. Position 219 (Arg219) interacts with L-aspartate. ATP-binding positions include 219–221 and Gln228; that span reads RDE. His449 contacts L-aspartate. Glu483 lines the ATP pocket. Arg490 serves as a coordination point for L-aspartate. 535 to 538 contributes to the ATP binding site; it reads GLDR.

Belongs to the class-II aminoacyl-tRNA synthetase family. Type 1 subfamily. In terms of assembly, homodimer.

Its subcellular location is the cytoplasm. It catalyses the reaction tRNA(Asp) + L-aspartate + ATP = L-aspartyl-tRNA(Asp) + AMP + diphosphate. Its function is as follows. Catalyzes the attachment of L-aspartate to tRNA(Asp) in a two-step reaction: L-aspartate is first activated by ATP to form Asp-AMP and then transferred to the acceptor end of tRNA(Asp). This is Aspartate--tRNA ligase from Shewanella loihica (strain ATCC BAA-1088 / PV-4).